Reading from the N-terminus, the 360-residue chain is Photosystem II protein D1 1 (360 aa).

The Cytoplasmic segment spans residues 2 to 31 (TTTLQRRESANLWERFCNWVTSTDNRLYVG). Residues 32 to 53 (WFGVIMIPTLLAATICFVIAFI) traverse the membrane as a helical segment. The Lumenal segment spans residues 54–110 (AAPPVDIDGIREPVSGSLLYGNNIITGAVVPSSNAIGLHFYPIWEAASLDEWLYNGG). The helical transmembrane segment at 111–132 (PYQLIIFHFLLGASCYMGRQWE) threads the bilayer. His-118 provides a ligand contact to chlorophyll a. Positions 126 and 130 each coordinate pheophytin a. The Cytoplasmic portion of the chain corresponds to 133-142 (LSYRLGMRPW). Residues 143–163 (ICVAYSAPLASAFAVFLIYPI) form a helical membrane-spanning segment. Tyr-147 provides a ligand contact to pheophytin a. Over 164-191 (GQGSFSDGMPLGISGTFNFMIVFQAEHN) the chain is Lumenal. Residues Asp-170 and Glu-189 each contribute to the [CaMn4O5] cluster site. The chain crosses the membrane as a helical span at residues 192–217 (ILMHPFHQLGVAGVFGGALFCAMHGS). His-198 contributes to the chlorophyll a binding site. A quinone-binding positions include His-215 and 264–265 (SF). A Fe cation-binding site is contributed by His-215. Residues 218–272 (LVTSSLIRETTETESANYGYKFGQEEETYNIVAAHGYFGRLIFQYASFNNSRSLH) lie on the Cytoplasmic side of the membrane. Position 272 (His-272) interacts with Fe cation. A helical transmembrane segment spans residues 273 to 295 (FFLAAWPVVGVWFTALGISTMAF). The Lumenal portion of the chain corresponds to 296-344 (NLNGFNFNHSVIDAKGNVINTWADIINRANLGMEVMHERNAHNFPLDLA). [CaMn4O5] cluster is bound by residues His-332, Glu-333, Asp-342, and Ala-344. A propeptide spanning residues 345–360 (SAESAPVAMIAPSING) is cleaved from the precursor.

This sequence belongs to the reaction center PufL/M/PsbA/D family. PSII is composed of 1 copy each of membrane proteins PsbA, PsbB, PsbC, PsbD, PsbE, PsbF, PsbH, PsbI, PsbJ, PsbK, PsbL, PsbM, PsbT, PsbX, PsbY, PsbZ, Psb30/Ycf12, peripheral proteins PsbO, CyanoQ (PsbQ), PsbU, PsbV and a large number of cofactors. It forms dimeric complexes. Precursor protein interacts with Ycf48. Part of a photosystem II (PSII) assembly intermediate complex PSII-I; crystallized from a strain deleted of psbJ, it forms monomeric PSII before addition of the oxygen evolving complex. PSII-I includes 3 assembly factors not found in mature PSII (Psb27, Psb28 and Psb34). In PSII-I the C-terminus of D1 (this subunit) is already processed but not yet found at its final position. It depends on The D1/D2 heterodimer binds P680, chlorophylls that are the primary electron donor of PSII, and subsequent electron acceptors. It shares a non-heme iron and each subunit binds pheophytin, quinone, additional chlorophylls, carotenoids and lipids. D1 provides most of the ligands for the Mn4-Ca-O5 cluster of the oxygen-evolving complex (OEC). There is also a Cl(-1) ion associated with D1 and D2, which is required for oxygen evolution. PSII binds additional chlorophylls, carotenoids and specific lipids. as a cofactor. Post-translationally, C-terminally processed by CtpA; processing is essential to allow assembly of the oxygen-evolving complex and thus photosynthetic growth. Tyr-161 forms a radical intermediate that is referred to as redox-active TyrZ, YZ or Y-Z.

It localises to the cellular thylakoid membrane. It carries out the reaction 2 a plastoquinone + 4 hnu + 2 H2O = 2 a plastoquinol + O2. In terms of biological role, photosystem II (PSII) is a light-driven water:plastoquinone oxidoreductase that uses light energy to abstract electrons from H(2)O, generating O(2) and a proton gradient subsequently used for ATP formation. It consists of a core antenna complex that captures photons, and an electron transfer chain that converts photonic excitation into a charge separation. The D1/D2 (PsbA/PsbD) reaction center heterodimer binds P680, the primary electron donor of PSII as well as several subsequent electron acceptors. The sequence is that of Photosystem II protein D1 1 from Thermosynechococcus vestitus (strain NIES-2133 / IAM M-273 / BP-1).